A 348-amino-acid polypeptide reads, in one-letter code: Benzoate 1,2-dioxygenase electron transfer component (348 aa).

Positions 14–109 (HQVALQFEDG…DAVFQIQASS (96 aa)) constitute a 2Fe-2S ferredoxin-type domain. 4 residues coordinate [2Fe-2S] cluster: Cys-51, Cys-56, Cys-59, and Cys-93. The segment at 111–348 (VCKTKIHHFE…NFLFEKFSAN (238 aa)) is ferredoxin-reductase. The FAD-binding FR-type domain maps to 116–217 (IHHFEGTLAR…TGPFGSFYLR (102 aa)).

The protein belongs to the bacterial ring-hydroxylating dioxygenase ferredoxin reductase family. In terms of assembly, this dioxygenase system consists of three proteins: the two subunits of the hydroxylase component (BenA and BenB), and an electron transfer component (BenC). FAD is required as a cofactor. The cofactor is [2Fe-2S] cluster.

It carries out the reaction 2 reduced [2Fe-2S]-[ferredoxin] + NAD(+) + H(+) = 2 oxidized [2Fe-2S]-[ferredoxin] + NADH. It participates in xenobiotic degradation; toluene degradation. Functionally, electron transfer component of benzoate 1,2-dioxygenase system. The protein is Benzoate 1,2-dioxygenase electron transfer component (benC) of Acinetobacter baylyi (strain ATCC 33305 / BD413 / ADP1).